A 241-amino-acid chain; its full sequence is Triosephosphate isomerase (241 aa).

8–10 (NWK) lines the substrate pocket. Histidine 93 functions as the Electrophile in the catalytic mechanism. Glutamate 163 functions as the Proton acceptor in the catalytic mechanism. Residues glycine 169, serine 205, and 226–227 (GG) each bind substrate.

Belongs to the triosephosphate isomerase family. In terms of assembly, homodimer.

The protein localises to the cytoplasm. The catalysed reaction is D-glyceraldehyde 3-phosphate = dihydroxyacetone phosphate. Its pathway is carbohydrate biosynthesis; gluconeogenesis. The protein operates within carbohydrate degradation; glycolysis; D-glyceraldehyde 3-phosphate from glycerone phosphate: step 1/1. Its function is as follows. Involved in the gluconeogenesis. Catalyzes stereospecifically the conversion of dihydroxyacetone phosphate (DHAP) to D-glyceraldehyde-3-phosphate (G3P). This Bdellovibrio bacteriovorus (strain ATCC 15356 / DSM 50701 / NCIMB 9529 / HD100) protein is Triosephosphate isomerase.